The primary structure comprises 436 residues: Xylose isomerase (436 aa).

The Mg(2+) site is built by aspartate 306 and aspartate 308.

It belongs to the xylose isomerase family. In terms of assembly, homotetramer. It depends on Mg(2+) as a cofactor.

Its subcellular location is the cytoplasm. The enzyme catalyses alpha-D-xylose = alpha-D-xylulofuranose. In Sinorhizobium fredii (strain NBRC 101917 / NGR234), this protein is Xylose isomerase.